We begin with the raw amino-acid sequence, 228 residues long: L-ribulose-5-phosphate 4-epimerase UlaF (228 aa).

Residues 26-27 (GN), 43-44 (SG), and 72-73 (SS) contribute to the substrate site. Positions 74, 93, and 95 each coordinate Zn(2+). Asp-118 serves as the catalytic Proton donor/acceptor. Zn(2+) is bound at residue His-167. Tyr-225 serves as the catalytic Proton donor/acceptor.

Belongs to the aldolase class II family. AraD/FucA subfamily. Zn(2+) serves as cofactor.

The catalysed reaction is L-ribulose 5-phosphate = D-xylulose 5-phosphate. Its pathway is cofactor degradation; L-ascorbate degradation; D-xylulose 5-phosphate from L-ascorbate: step 4/4. Catalyzes the isomerization of L-ribulose 5-phosphate to D-xylulose 5-phosphate. Is involved in the anaerobic L-ascorbate utilization. The protein is L-ribulose-5-phosphate 4-epimerase UlaF of Escherichia coli O139:H28 (strain E24377A / ETEC).